Here is a 564-residue protein sequence, read N- to C-terminus: Asparagine synthetase domain-containing protein CG17486 (564 aa).

Cysteine 2 acts as the Nucleophile in catalysis. One can recognise a Glutamine amidotransferase type-2 domain in the interval 2–180 (CGIFCSVVNN…PLGLFRVKLN (179 aa)). The 262-residue stretch at 280–541 (PFCRLCMQKL…GLRDVVFLKK (262 aa)) folds into the Asparagine synthetase domain.

The sequence is that of Asparagine synthetase domain-containing protein CG17486 from Drosophila melanogaster (Fruit fly).